A 303-amino-acid polypeptide reads, in one-letter code: ATP synthase gamma chain (303 aa).

Belongs to the ATPase gamma chain family. F-type ATPases have 2 components, CF(1) - the catalytic core - and CF(0) - the membrane proton channel. CF(1) has five subunits: alpha(3), beta(3), gamma(1), delta(1), epsilon(1). CF(0) has three main subunits: a, b and c.

It localises to the cell inner membrane. In terms of biological role, produces ATP from ADP in the presence of a proton gradient across the membrane. The gamma chain is believed to be important in regulating ATPase activity and the flow of protons through the CF(0) complex. This Bartonella quintana (strain Toulouse) (Rochalimaea quintana) protein is ATP synthase gamma chain.